The primary structure comprises 149 residues: Large ribosomal subunit protein bL9 (149 aa).

The protein belongs to the bacterial ribosomal protein bL9 family.

Functionally, binds to the 23S rRNA. This chain is Large ribosomal subunit protein bL9, found in Xanthomonas oryzae pv. oryzae (strain MAFF 311018).